The following is a 428-amino-acid chain: Endoplasmic reticulum junction formation protein lunapark (428 aa).

The N-myristoyl glycine moiety is linked to residue Gly2. Topologically, residues 2–45 (GGLFSRWRTKPSTVEVLESIDKEIQALEEFREKNQRLQKLWVGR) are cytoplasmic. Positions 16-41 (EVLESIDKEIQALEEFREKNQRLQKL) form a coiled coil. A helical membrane pass occupies residues 46 to 66 (LILYSSVLYLFTCLIVYLWYL). Residues 67–77 (PDEFTARLAMT) are Lumenal-facing. A helical membrane pass occupies residues 78–98 (LPFFAFPLIIWSIRTVIIFFF). Residues 99 to 428 (SKRTERNNEA…ELSGESLTAE (330 aa)) are Cytoplasmic-facing. Residues 102–128 (TERNNEALDDLKSQRKKILEEVMEKET) adopt a coiled-coil conformation. Residues Ser114, Ser153, Ser177, Ser182, and Ser194 each carry the phosphoserine modification. Residues 143–247 (SKKAKECEPP…HPPGPPLARP (105 aa)) form a disordered region. The span at 185-198 (QGPPPQVPVSPGPP) shows a compositional bias: pro residues. Thr211 and Thr213 each carry phosphothreonine. 2 positions are modified to phosphoserine: Ser217 and Ser227. The C4-type; plays a role in ER morphology zinc-finger motif lies at 276–301 (CQQCFSHNGMALKEEFEYIAFRCAYC). Phosphoserine occurs at positions 321, 353, and 384. Positions 356 to 428 (HDVLDDNTEQ…ELSGESLTAE (73 aa)) are disordered. Over residues 386 to 401 (SEEPEEKQETENEEAS) the composition is skewed to acidic residues. Ser414 carries the post-translational modification Phosphoserine.

Belongs to the lunapark family. As to quaternary structure, homodimer; homodimerization requires the C4-type zinc finger motif and decreases during mitosis in a phosphorylation-dependent manner. Myristoylated; myristoylation is necessary for the endoplasmic reticulum (ER) three-way ER tubular junction formation, but is not required neither for membrane translocation, membrane topology formation, nor for the specific localization to ER membranes. Post-translationally, phosphorylated. Phosphorylation occurs at Ser-177, Ser-182, Ser-217, Ser-227, Ser-321 and Ser-384 during interphase. Phosphorylation occurs at Ser-114, Ser-153, Ser-194, Thr-211 and Ser-353 during mitosis; these phosphorylations reduce both its homodimerization and the ER three-way tubular junction formation. In terms of processing, subject to proteasomal degradation following phosphorylation during mitosis. Expressed in neural precursor cells, where it is detected at the growth-cone-like structure and branching sites of neurite-like processes.

The protein resides in the endoplasmic reticulum membrane. Functionally, endoplasmic reticulum (ER)-shaping membrane protein that plays a role in determining ER morphology. Involved in the stabilization of nascent three-way ER tubular junctions within the ER network. May also play a role as a curvature-stabilizing protein within the three-way ER tubular junction network. May be involved in limb development. Is involved in central nervous system development. In Homo sapiens (Human), this protein is Endoplasmic reticulum junction formation protein lunapark.